A 258-amino-acid chain; its full sequence is UPF0246 protein VS_0505 (258 aa).

It belongs to the UPF0246 family.

This is UPF0246 protein VS_0505 from Vibrio atlanticus (strain LGP32) (Vibrio splendidus (strain Mel32)).